The chain runs to 235 residues: Uridylate kinase (235 aa).

9–12 (KISG) serves as a coordination point for ATP. Gly50 contributes to the UMP binding site. ATP-binding residues include Gly51 and Arg55. UMP-binding positions include Asp70 and 131–138 (TGFPYFTT). Asn159, Tyr165, and Asp168 together coordinate ATP.

The protein belongs to the UMP kinase family. Homohexamer; trimer of dimers.

It is found in the cytoplasm. It catalyses the reaction UMP + ATP = UDP + ADP. It functions in the pathway pyrimidine metabolism; CTP biosynthesis via de novo pathway; UDP from UMP (UMPK route): step 1/1. With respect to regulation, unlike other bacteria, is not activated by GTP. UTP is a competitive inhibitor against UMP and a non-competitive inhibitor toward ATP. In terms of biological role, catalyzes the reversible phosphorylation of UMP to UDP, with ATP as the most efficient phosphate donor. Is also able to phosphorylate dUMP. The chain is Uridylate kinase (pyrH) from Ureaplasma parvum serovar 3 (strain ATCC 700970).